The chain runs to 92 residues: DNA-directed RNA polymerase subunit omega (92 aa).

This sequence belongs to the RNA polymerase subunit omega family. The RNAP catalytic core consists of 2 alpha, 1 beta, 1 beta' and 1 omega subunit. When a sigma factor is associated with the core the holoenzyme is formed, which can initiate transcription.

It catalyses the reaction RNA(n) + a ribonucleoside 5'-triphosphate = RNA(n+1) + diphosphate. Functionally, promotes RNA polymerase assembly. Latches the N- and C-terminal regions of the beta' subunit thereby facilitating its interaction with the beta and alpha subunits. The polypeptide is DNA-directed RNA polymerase subunit omega (Corynebacterium diphtheriae (strain ATCC 700971 / NCTC 13129 / Biotype gravis)).